Consider the following 511-residue polypeptide: IWS1-like protein (511 aa).

The disordered stretch occupies residues 1 to 200; the sequence is MSDHEEESHG…DDGPVDRHGR (200 aa). Low complexity-rich tracts occupy residues 11-30 and 55-86; these read ASPT…PISP and APAS…SPVK. The span at 94–103 shows a compositional bias: acidic residues; the sequence is DSDEDSDAEE. Over residues 134-143 the composition is skewed to basic and acidic residues; the sequence is HEGTSKKEPT. The span at 166–179 shows a compositional bias: acidic residues; it reads LDEFVEGRDEEESQ. The TFIIS N-terminal domain maps to 294–374; that stretch reads SALSEWLAPL…GEWARPIYHL (81 aa). The tract at residues 382–454 is disordered; it reads SRQEREERDY…RARVPKPSTK (73 aa). Basic and acidic residues-rich tracts occupy residues 383–395 and 414–425; these read RQER…SRMP and DQPKRPRIRDAD.

Belongs to the IWS1 family.

Its subcellular location is the nucleus. The chain is IWS1-like protein from Caenorhabditis elegans.